We begin with the raw amino-acid sequence, 264 residues long: Indole-3-glycerol phosphate synthase (264 aa).

This sequence belongs to the TrpC family.

It carries out the reaction 1-(2-carboxyphenylamino)-1-deoxy-D-ribulose 5-phosphate + H(+) = (1S,2R)-1-C-(indol-3-yl)glycerol 3-phosphate + CO2 + H2O. Its pathway is amino-acid biosynthesis; L-tryptophan biosynthesis; L-tryptophan from chorismate: step 4/5. The sequence is that of Indole-3-glycerol phosphate synthase from Xylella fastidiosa (strain M23).